The primary structure comprises 148 residues: MADPARAGRLAQRIKVLVAEALRRGVKDDRVEPVTVTEVRVTNDLQHATVYYTVLGDEATVAAAHEGIQDNRGILRREVGRGLTIRLVPTLEFVADTVPEAAAHLEDVLRAAKERDAELAKAREGASYAGDADPYRTAEPDADDAPRA.

The interval 120–148 (AKAREGASYAGDADPYRTAEPDADDAPRA) is disordered. Basic and acidic residues predominate over residues 133-148 (DPYRTAEPDADDAPRA).

The protein belongs to the RbfA family. In terms of assembly, monomer. Binds 30S ribosomal subunits, but not 50S ribosomal subunits or 70S ribosomes.

It is found in the cytoplasm. Functionally, one of several proteins that assist in the late maturation steps of the functional core of the 30S ribosomal subunit. Associates with free 30S ribosomal subunits (but not with 30S subunits that are part of 70S ribosomes or polysomes). Required for efficient processing of 16S rRNA. May interact with the 5'-terminal helix region of 16S rRNA. In Micrococcus luteus (strain ATCC 4698 / DSM 20030 / JCM 1464 / CCM 169 / CCUG 5858 / IAM 1056 / NBRC 3333 / NCIMB 9278 / NCTC 2665 / VKM Ac-2230) (Micrococcus lysodeikticus), this protein is Ribosome-binding factor A.